Consider the following 385-residue polypeptide: SWI/SNF-related matrix-associated actin-dependent regulator of chromatin subfamily B member 1 (385 aa).

The interval 1-113 is DNA-binding; it reads MMMMALSKTF…DEKYKAVSIS (113 aa). Glycyl lysine isopeptide (Lys-Gly) (interchain with G-Cter in SUMO2) cross-links involve residues lysine 106, lysine 108, and lysine 124. Residue serine 129 is modified to Phosphoserine. A Glycyl lysine isopeptide (Lys-Gly) (interchain with G-Cter in SUMO2) cross-link involves residue lysine 161. The interval 183–243 is HIV-1 integrase-binding; the sequence is PEVLVPIRLD…VPAIASAIRQ (61 aa). 2 consecutive repeat copies span residues 186–245 and 259–319. The tract at residues 186–245 is MYC-binding; the sequence is LVPIRLDMEIDGQKLRDAFTWNMNEKLMTPEMFSEILCDDLDLNPLTFVPAIASAIRQQI. The 2 X approximate tandem repeats stretch occupies residues 186–319; the sequence is LVPIRLDMEI…TIAYSIRGQL (134 aa). The tract at residues 304–318 is interaction with PPP1R15A; sequence GGEFVTTIAYSIRGQ.

It belongs to the SNF5 family. In terms of assembly, component of the multiprotein chromatin-remodeling complexes SWI/SNF: SWI/SNF-A (BAF), SWI/SNF-B (PBAF) and related complexes. The canonical complex contains a catalytic subunit (either SMARCA4/BRG1/BAF190A or SMARCA2/BRM/BAF190B) and at least SMARCE1, ACTL6A/BAF53, SMARCC1/BAF155, SMARCC2/BAF170, and SMARCB1/SNF5/BAF47. Other subunits specific to each of the complexes may also be present permitting several possible combinations developmentally and tissue specific. Component of the BAF complex, which includes at least actin (ACTB), ARID1A/BAF250A, ARID1B/BAF250B, SMARCA2/BRM, SMARCA4/BRG1/BAF190A, ACTL6A/BAF53, ACTL6B/BAF53B, SMARCE1/BAF57 SMARCC1/BAF155, SMARCC2/BAF170, SMARCB1/SNF5/INI1, and one or more SMARCD1/BAF60A, SMARCD2/BAF60B, or SMARCD3/BAF60C. In muscle cells, the BAF complex also contains DPF3. Component of neural progenitors-specific chromatin remodeling complex (npBAF complex) composed of at least, ARID1A/BAF250A or ARID1B/BAF250B, SMARCD1/BAF60A, SMARCD3/BAF60C, SMARCA2/BRM/BAF190B, SMARCA4/BRG1/BAF190A, SMARCB1/BAF47, SMARCC1/BAF155, SMARCE1/BAF57, SMARCC2/BAF170, PHF10/BAF45A, ACTL6A/BAF53A and actin. Component of neuron-specific chromatin remodeling complex (nBAF complex) composed of at least, ARID1A/BAF250A or ARID1B/BAF250B, SMARCD1/BAF60A, SMARCD3/BAF60C, SMARCA2/BRM/BAF190B, SMARCA4/BRG1/BAF190A, SMARCB1/BAF47, SMARCC1/BAF155, SMARCE1/BAF57, SMARCC2/BAF170, DPF1/BAF45B, DPF3/BAF45C, ACTL6B/BAF53B and actin. Component of the SWI/SNF-B (PBAF) chromatin remodeling complex, at least composed of SMARCA4/BRG1, SMARCB1/BAF47/SNF5, ACTL6A/BAF53A or ACTL6B/BAF53B, SMARCE1/BAF57, SMARCD1/BAF60A, SMARCD2/BAF60B, perhaps SMARCD3/BAF60C, SMARCC1/BAF155, SMARCC2/BAF170, PBRM1/BAF180, ARID2/BAF200 and actin. Binds to double-stranded DNA. Interacts with CEBPB (when not methylated). Interacts with PIH1D1. Interacts with MYK and MAEL. Interacts with PPP1R15A. Interacts with DPF2. Interacts with YWHAZ. Interacts with ERCC6. Interacts with FOS, FOSB isoform 1 and 2, FOSL1 and FOSL2. As to quaternary structure, (Microbial infection) Binds tightly to the human immunodeficiency virus-type 1 (HIV-1) integrase in vitro and stimulates its DNA-joining activity. Interacts with human papillomavirus 18 E1 protein to stimulate its viral replication. Interacts with Epstein-Barr virus protein EBNA-2.

It is found in the nucleus. In terms of biological role, core component of the BAF (hSWI/SNF) complex. This ATP-dependent chromatin-remodeling complex plays important roles in cell proliferation and differentiation, in cellular antiviral activities and inhibition of tumor formation. The BAF complex is able to create a stable, altered form of chromatin that constrains fewer negative supercoils than normal. This change in supercoiling would be due to the conversion of up to one-half of the nucleosomes on polynucleosomal arrays into asymmetric structures, termed altosomes, each composed of 2 histones octamers. Stimulates in vitro the remodeling activity of SMARCA4/BRG1/BAF190A. Involved in activation of CSF1 promoter. Belongs to the neural progenitors-specific chromatin remodeling complex (npBAF complex) and the neuron-specific chromatin remodeling complex (nBAF complex). During neural development a switch from a stem/progenitor to a postmitotic chromatin remodeling mechanism occurs as neurons exit the cell cycle and become committed to their adult state. The transition from proliferating neural stem/progenitor cells to postmitotic neurons requires a switch in subunit composition of the npBAF and nBAF complexes. As neural progenitors exit mitosis and differentiate into neurons, npBAF complexes which contain ACTL6A/BAF53A and PHF10/BAF45A, are exchanged for homologous alternative ACTL6B/BAF53B and DPF1/BAF45B or DPF3/BAF45C subunits in neuron-specific complexes (nBAF). The npBAF complex is essential for the self-renewal/proliferative capacity of the multipotent neural stem cells. The nBAF complex along with CREST plays a role regulating the activity of genes essential for dendrite growth. Plays a key role in cell-cycle control and causes cell cycle arrest in G0/G1. This Homo sapiens (Human) protein is SWI/SNF-related matrix-associated actin-dependent regulator of chromatin subfamily B member 1 (SMARCB1).